The sequence spans 434 residues: 3-phosphoshikimate 1-carboxyvinyltransferase (434 aa).

The 3-phosphoshikimate site is built by Lys-22, Ser-23, and Arg-27. Lys-22 contacts phosphoenolpyruvate. Gly-93 and Arg-121 together coordinate phosphoenolpyruvate. Ser-168, Ser-169, Gln-170, Ser-199, Asp-320, and Lys-347 together coordinate 3-phosphoshikimate. A phosphoenolpyruvate-binding site is contributed by Gln-170. The Proton acceptor role is filled by Asp-320. Residues Arg-351, Arg-394, and Lys-419 each coordinate phosphoenolpyruvate.

Belongs to the EPSP synthase family. As to quaternary structure, monomer.

The protein resides in the cytoplasm. It catalyses the reaction 3-phosphoshikimate + phosphoenolpyruvate = 5-O-(1-carboxyvinyl)-3-phosphoshikimate + phosphate. It functions in the pathway metabolic intermediate biosynthesis; chorismate biosynthesis; chorismate from D-erythrose 4-phosphate and phosphoenolpyruvate: step 6/7. Functionally, catalyzes the transfer of the enolpyruvyl moiety of phosphoenolpyruvate (PEP) to the 5-hydroxyl of shikimate-3-phosphate (S3P) to produce enolpyruvyl shikimate-3-phosphate and inorganic phosphate. This Paraburkholderia phymatum (strain DSM 17167 / CIP 108236 / LMG 21445 / STM815) (Burkholderia phymatum) protein is 3-phosphoshikimate 1-carboxyvinyltransferase.